Here is a 303-residue protein sequence, read N- to C-terminus: Oxygen-dependent coproporphyrinogen-III oxidase (303 aa).

Ser93 contributes to the substrate binding site. A divalent metal cation is bound by residues His97 and His107. His107 functions as the Proton donor in the catalytic mechanism. 109–111 (NVR) is a substrate binding site. Residues His149 and His179 each coordinate a divalent metal cation. The interval 244–279 (YVEFNLVFDRGTLFGLQSGGRTESILLSMPPMAQWR) is important for dimerization. 262-264 (GGR) lines the substrate pocket.

It belongs to the aerobic coproporphyrinogen-III oxidase family. In terms of assembly, homodimer. Requires a divalent metal cation as cofactor.

Its subcellular location is the cytoplasm. The catalysed reaction is coproporphyrinogen III + O2 + 2 H(+) = protoporphyrinogen IX + 2 CO2 + 2 H2O. It functions in the pathway porphyrin-containing compound metabolism; protoporphyrin-IX biosynthesis; protoporphyrinogen-IX from coproporphyrinogen-III (O2 route): step 1/1. In terms of biological role, involved in the heme biosynthesis. Catalyzes the aerobic oxidative decarboxylation of propionate groups of rings A and B of coproporphyrinogen-III to yield the vinyl groups in protoporphyrinogen-IX. In Bordetella petrii (strain ATCC BAA-461 / DSM 12804 / CCUG 43448), this protein is Oxygen-dependent coproporphyrinogen-III oxidase.